The following is a 63-amino-acid chain: Translational regulator CsrA (63 aa).

This sequence belongs to the CsrA/RsmA family. As to quaternary structure, homodimer; the beta-strands of each monomer intercalate to form a hydrophobic core, while the alpha-helices form wings that extend away from the core.

It is found in the cytoplasm. A key translational regulator that binds mRNA to regulate translation initiation and/or mRNA stability. Mediates global changes in gene expression, shifting from rapid growth to stress survival by linking envelope stress, the stringent response and the catabolite repression systems. Usually binds in the 5'-UTR; binding at or near the Shine-Dalgarno sequence prevents ribosome-binding, repressing translation, binding elsewhere in the 5'-UTR can activate translation and/or stabilize the mRNA. Its function is antagonized by small RNA(s). This Alteromonas mediterranea (strain DSM 17117 / CIP 110805 / LMG 28347 / Deep ecotype) protein is Translational regulator CsrA.